A 425-amino-acid polypeptide reads, in one-letter code: Serine--tRNA ligase (425 aa).

229–231 is an L-serine binding site; that stretch reads TSE. ATP contacts are provided by residues 259–261 and valine 275; that span reads RKE. Residue glutamate 282 participates in L-serine binding. 349–352 contacts ATP; it reads EVTS. Threonine 384 contributes to the L-serine binding site.

Belongs to the class-II aminoacyl-tRNA synthetase family. Type-1 seryl-tRNA synthetase subfamily. Homodimer. The tRNA molecule binds across the dimer.

Its subcellular location is the cytoplasm. The catalysed reaction is tRNA(Ser) + L-serine + ATP = L-seryl-tRNA(Ser) + AMP + diphosphate + H(+). The enzyme catalyses tRNA(Sec) + L-serine + ATP = L-seryl-tRNA(Sec) + AMP + diphosphate + H(+). It participates in aminoacyl-tRNA biosynthesis; selenocysteinyl-tRNA(Sec) biosynthesis; L-seryl-tRNA(Sec) from L-serine and tRNA(Sec): step 1/1. Catalyzes the attachment of serine to tRNA(Ser). Is also able to aminoacylate tRNA(Sec) with serine, to form the misacylated tRNA L-seryl-tRNA(Sec), which will be further converted into selenocysteinyl-tRNA(Sec). In Borreliella burgdorferi (strain ATCC 35210 / DSM 4680 / CIP 102532 / B31) (Borrelia burgdorferi), this protein is Serine--tRNA ligase.